Here is a 701-residue protein sequence, read N- to C-terminus: Polyribonucleotide nucleotidyltransferase (701 aa).

The Mg(2+) site is built by aspartate 487 and aspartate 493. A KH domain is found at proline 554–valine 613. The region spanning glycine 623 to lysine 691 is the S1 motif domain.

Belongs to the polyribonucleotide nucleotidyltransferase family. Component of the RNA degradosome, which is a multiprotein complex involved in RNA processing and mRNA degradation. Requires Mg(2+) as cofactor.

The protein localises to the cytoplasm. The enzyme catalyses RNA(n+1) + phosphate = RNA(n) + a ribonucleoside 5'-diphosphate. Functionally, involved in mRNA degradation. Catalyzes the phosphorolysis of single-stranded polyribonucleotides processively in the 3'- to 5'-direction. This chain is Polyribonucleotide nucleotidyltransferase, found in Stutzerimonas stutzeri (strain A1501) (Pseudomonas stutzeri).